Consider the following 557-residue polypeptide: Aerobic glycerol-3-phosphate dehydrogenase (557 aa).

21–49 (DVVIIGGGITGAGIALDASERGMKVALVE) contributes to the FAD binding site.

Belongs to the FAD-dependent glycerol-3-phosphate dehydrogenase family. The cofactor is FAD.

Its subcellular location is the cytoplasm. It carries out the reaction a quinone + sn-glycerol 3-phosphate = dihydroxyacetone phosphate + a quinol. It participates in polyol metabolism; glycerol degradation via glycerol kinase pathway; glycerone phosphate from sn-glycerol 3-phosphate (aerobic route): step 1/1. The protein is Aerobic glycerol-3-phosphate dehydrogenase (glpD) of Staphylococcus saprophyticus subsp. saprophyticus (strain ATCC 15305 / DSM 20229 / NCIMB 8711 / NCTC 7292 / S-41).